We begin with the raw amino-acid sequence, 230 residues long: Endonuclease NucS (230 aa).

It belongs to the NucS endonuclease family.

It is found in the cytoplasm. Cleaves both 3' and 5' ssDNA extremities of branched DNA structures. This chain is Endonuclease NucS, found in Corynebacterium glutamicum (strain ATCC 13032 / DSM 20300 / JCM 1318 / BCRC 11384 / CCUG 27702 / LMG 3730 / NBRC 12168 / NCIMB 10025 / NRRL B-2784 / 534).